A 371-amino-acid chain; its full sequence is UPF0284 protein tll2306 (371 aa).

Belongs to the UPF0284 family.

This is UPF0284 protein tll2306 from Thermosynechococcus vestitus (strain NIES-2133 / IAM M-273 / BP-1).